We begin with the raw amino-acid sequence, 469 residues long: Alpha-2C adrenergic receptor (469 aa).

The interval 1-29 is disordered; the sequence is MDLQLTTNSTDSGDRGGSSNESLQRQPPS. At 1–36 the chain is on the extracellular side; the sequence is MDLQLTTNSTDSGDRGGSSNESLQRQPPSQYSPAEV. N-linked (GlcNAc...) asparagine glycans are attached at residues N8 and N20. Residues 37–62 traverse the membrane as a helical segment; that stretch reads AGLAAVVSFLIVFTIVGNVLVVIAVL. Residues 63–73 are Cytoplasmic-facing; that stretch reads TSRALKAPQNL. Residues 74–99 traverse the membrane as a helical segment; sequence FQVSLASADILVATLVMPFSLANELM. Residues 100-109 are Extracellular-facing; it reads NYWYFGKVWC. C109 and C187 are joined by a disulfide. A helical membrane pass occupies residues 110 to 132; that stretch reads VIYLALDVLFCTSSIVHLCAISL. The Cytoplasmic portion of the chain corresponds to 133–154; that stretch reads DRYWSVTQAVEYNLKRTPRRIK. Residues 155–175 form a helical membrane-spanning segment; that stretch reads GIIVTVWLISAVISFPPLISL. Topologically, residues 176–194 are extracellular; sequence YRDPEDDLYPQCELNDETW. The helical transmembrane segment at 195–216 threads the bilayer; the sequence is YILSSCIGSFFAPCIIMVLVYV. The Cytoplasmic segment spans residues 217–386; it reads RIYRVAKLRT…RKVTQAREKR (170 aa). Disordered stretches follow at residues 232–261 and 279–353; these read KRTV…AAAA and HHHH…SRLS. The span at 279 to 296 shows a compositional bias: basic residues; it reads HHHHHLHHHHHHHHHQLR. The span at 301-310 shows a compositional bias: acidic residues; it reads LEDIELEESS. Low complexity predominate over residues 331-353; the sequence is RGFSFSFSSTKGGQSAGAGSRLS. The helical transmembrane segment at 387–407 threads the bilayer; that stretch reads FTFVLAVVMGVFVVCWFPFFF. The Extracellular portion of the chain corresponds to 408 to 427; sequence TYSLYGICREACQVPETLFK. A helical transmembrane segment spans residues 428 to 448; that stretch reads FFFWIGYCNSSLNPVIYTIFN. At 449–469 the chain is on the cytoplasmic side; it reads QDFRRSFKHILFKKKKKTSLQ.

The protein belongs to the G-protein coupled receptor 1 family. Adrenergic receptor subfamily. ADRA2C sub-subfamily.

It localises to the cell membrane. Alpha-2 adrenergic receptors mediate the catecholamine-induced inhibition of adenylate cyclase through the action of G proteins. The sequence is that of Alpha-2C adrenergic receptor (ADRA2C) from Didelphis virginiana (North American opossum).